The sequence spans 225 residues: 7-cyano-7-deazaguanine synthase (225 aa).

Residue 10–20 coordinates ATP; that stretch reads VSGGLDSTTAL. The Zn(2+) site is built by Cys-189, Cys-199, Cys-202, and Cys-205.

This sequence belongs to the QueC family. Zn(2+) serves as cofactor.

It carries out the reaction 7-carboxy-7-deazaguanine + NH4(+) + ATP = 7-cyano-7-deazaguanine + ADP + phosphate + H2O + H(+). It participates in purine metabolism; 7-cyano-7-deazaguanine biosynthesis. Its function is as follows. Catalyzes the ATP-dependent conversion of 7-carboxy-7-deazaguanine (CDG) to 7-cyano-7-deazaguanine (preQ(0)). The sequence is that of 7-cyano-7-deazaguanine synthase from Saccharophagus degradans (strain 2-40 / ATCC 43961 / DSM 17024).